Consider the following 219-residue polypeptide: Guanylate kinase (219 aa).

A Guanylate kinase-like domain is found at 15–194 (GLMFVLSSPS…AFAEVQSILK (180 aa)). An ATP-binding site is contributed by 22-29 (SPSGAGKT).

This sequence belongs to the guanylate kinase family.

The protein localises to the cytoplasm. It catalyses the reaction GMP + ATP = GDP + ADP. Its function is as follows. Essential for recycling GMP and indirectly, cGMP. The sequence is that of Guanylate kinase from Nitrobacter winogradskyi (strain ATCC 25391 / DSM 10237 / CIP 104748 / NCIMB 11846 / Nb-255).